A 388-amino-acid polypeptide reads, in one-letter code: S-adenosylmethionine synthase (388 aa).

Histidine 16 contacts ATP. Aspartate 18 serves as a coordination point for Mg(2+). Glutamate 44 lines the K(+) pocket. The L-methionine site is built by glutamate 57 and glutamine 100. Residues 100–110 (QSPDIAQGVNE) are flexible loop. ATP-binding positions include 167–169 (DGK), 233–234 (RF), aspartate 242, 248–249 (RK), and lysine 269. Aspartate 242 lines the L-methionine pocket. Residue lysine 273 participates in L-methionine binding.

The protein belongs to the AdoMet synthase family. In terms of assembly, homotetramer; dimer of dimers. Requires Mg(2+) as cofactor. The cofactor is K(+).

The protein resides in the cytoplasm. It catalyses the reaction L-methionine + ATP + H2O = S-adenosyl-L-methionine + phosphate + diphosphate. The protein operates within amino-acid biosynthesis; S-adenosyl-L-methionine biosynthesis; S-adenosyl-L-methionine from L-methionine: step 1/1. Its function is as follows. Catalyzes the formation of S-adenosylmethionine (AdoMet) from methionine and ATP. The overall synthetic reaction is composed of two sequential steps, AdoMet formation and the subsequent tripolyphosphate hydrolysis which occurs prior to release of AdoMet from the enzyme. This is S-adenosylmethionine synthase from Desulfosudis oleivorans (strain DSM 6200 / JCM 39069 / Hxd3) (Desulfococcus oleovorans).